Reading from the N-terminus, the 193-residue chain is dCTP deaminase (193 aa).

DCTP-binding positions include arginine 110 to arginine 115, aspartate 128, valine 136 to glutamate 138, tyrosine 171, lysine 178, and glutamine 182. The active-site Proton donor/acceptor is glutamate 138. The segment at arginine 169 to aspartate 193 is disordered.

Belongs to the dCTP deaminase family. As to quaternary structure, homotrimer.

The catalysed reaction is dCTP + H2O + H(+) = dUTP + NH4(+). It functions in the pathway pyrimidine metabolism; dUMP biosynthesis; dUMP from dCTP (dUTP route): step 1/2. Functionally, catalyzes the deamination of dCTP to dUTP. The sequence is that of dCTP deaminase from Escherichia coli O8 (strain IAI1).